Reading from the N-terminus, the 501-residue chain is Actin-binding protein WASF3 (501 aa).

Residues 57–93 (NEANNFYIRANSLQDRIDRLAVKVTQLDSTVEEVSLQ) are a coiled coil. Tyr151 carries the phosphotyrosine; by ABL1 modification. A coiled-coil region spans residues 162-206 (KEKMLQDTEDKRKEKRRQKEQKRVDGTTREVKKVRKARNRRQEWN). The interval 170-443 (EDKRKEKRRQ…PPISDARSDL (274 aa)) is disordered. Residues 182–192 (QKRVDGTTREV) show a composition bias toward basic and acidic residues. A compositionally biased stretch (polar residues) spans 219-237 (RLSQSVHHGASSEGSLSPD). A Phosphotyrosine; by ABL1 modification is found at Tyr248. Residues 256-267 (HALQAQPATPSY) show a composition bias toward polar residues. Residues 302-312 (QQPPPPPPPQA) show a composition bias toward pro residues. Phosphotyrosine; by ABL1 is present on Tyr337. Pro residues-rich tracts occupy residues 341-352 (SGPPPPPPPPMI) and 394-410 (APPP…PPGP). The segment covering 411–422 (SSLSSSPMHGPP) has biased composition (low complexity). The WH2 domain maps to 439–456 (ARSDLLAAIRMGIQLKKV). Tyr485 is subject to Phosphotyrosine; by ABL1.

Belongs to the SCAR/WAVE family. Binds actin and the Arp2/3 complex. Post-translationally, phosphorylation by ABL1 promotes lamellipodia formation and cell migration.

It is found in the cytoplasm. The protein localises to the cytoskeleton. Downstream effector molecules involved in the transmission of signals from tyrosine kinase receptors and small GTPases to the actin cytoskeleton. Plays a role in the regulation of cell morphology and cytoskeletal organization. Required in the control of cell shape. This is Actin-binding protein WASF3 (Wasf3) from Mus musculus (Mouse).